Consider the following 99-residue polypeptide: Large ribosomal subunit protein uL23 (99 aa).

The protein belongs to the universal ribosomal protein uL23 family. As to quaternary structure, part of the 50S ribosomal subunit. Contacts protein L29, and trigger factor when it is bound to the ribosome.

In terms of biological role, one of the early assembly proteins it binds 23S rRNA. One of the proteins that surrounds the polypeptide exit tunnel on the outside of the ribosome. Forms the main docking site for trigger factor binding to the ribosome. The polypeptide is Large ribosomal subunit protein uL23 (Pseudomonas savastanoi pv. phaseolicola (strain 1448A / Race 6) (Pseudomonas syringae pv. phaseolicola (strain 1448A / Race 6))).